Consider the following 862-residue polypeptide: Leucine--tRNA ligase (862 aa).

The 'HIGH' region signature appears at 51–61; that stretch reads PYPSGSLHMGH. Positions 624–628 match the 'KMSKS' region motif; that stretch reads KMSKS. K627 lines the ATP pocket.

Belongs to the class-I aminoacyl-tRNA synthetase family.

It localises to the cytoplasm. It carries out the reaction tRNA(Leu) + L-leucine + ATP = L-leucyl-tRNA(Leu) + AMP + diphosphate. In Prochlorococcus marinus (strain NATL2A), this protein is Leucine--tRNA ligase.